A 489-amino-acid chain; its full sequence is Phosphoglucosamine mutase (489 aa).

Residue Ser136 is the Phosphoserine intermediate of the active site. Mg(2+) contacts are provided by Ser136, Asp275, Asp277, and Asp279. A Phosphoserine modification is found at Ser136.

The protein belongs to the phosphohexose mutase family. Mg(2+) serves as cofactor. In terms of processing, activated by phosphorylation.

The catalysed reaction is alpha-D-glucosamine 1-phosphate = D-glucosamine 6-phosphate. In terms of biological role, catalyzes the conversion of glucosamine-6-phosphate to glucosamine-1-phosphate. The polypeptide is Phosphoglucosamine mutase (Trichodesmium erythraeum (strain IMS101)).